The primary structure comprises 476 residues: Bifunctional protein GlmU (476 aa).

Residues 1–235 (MTALDIIIMA…ALQVAGVNSP (235 aa)) form a pyrophosphorylase region. Residues lysine 23, glutamine 81, 86 to 87 (GT), 108 to 110 (SGD), glycine 145, glutamate 160, and asparagine 233 contribute to the UDP-N-acetyl-alpha-D-glucosamine site. Aspartate 110 serves as a coordination point for Mg(2+). Asparagine 233 serves as a coordination point for Mg(2+). Residues 236-256 (AQLADLERAHQRAQAAALMEQ) are linker. An N-acetyltransferase region spans residues 257 to 476 (GVRLADPARF…WKRPAKQAKG (220 aa)). UDP-N-acetyl-alpha-D-glucosamine-binding residues include arginine 351 and lysine 369. Histidine 381 serves as the catalytic Proton acceptor. Residues tyrosine 384 and asparagine 395 each contribute to the UDP-N-acetyl-alpha-D-glucosamine site. Acetyl-CoA is bound by residues alanine 398, 404–405 (NY), serine 423, glycine 441, and arginine 458.

In the N-terminal section; belongs to the N-acetylglucosamine-1-phosphate uridyltransferase family. This sequence in the C-terminal section; belongs to the transferase hexapeptide repeat family. As to quaternary structure, homotrimer. Mg(2+) is required as a cofactor.

It localises to the cytoplasm. The catalysed reaction is alpha-D-glucosamine 1-phosphate + acetyl-CoA = N-acetyl-alpha-D-glucosamine 1-phosphate + CoA + H(+). It catalyses the reaction N-acetyl-alpha-D-glucosamine 1-phosphate + UTP + H(+) = UDP-N-acetyl-alpha-D-glucosamine + diphosphate. Its pathway is nucleotide-sugar biosynthesis; UDP-N-acetyl-alpha-D-glucosamine biosynthesis; N-acetyl-alpha-D-glucosamine 1-phosphate from alpha-D-glucosamine 6-phosphate (route II): step 2/2. It participates in nucleotide-sugar biosynthesis; UDP-N-acetyl-alpha-D-glucosamine biosynthesis; UDP-N-acetyl-alpha-D-glucosamine from N-acetyl-alpha-D-glucosamine 1-phosphate: step 1/1. It functions in the pathway bacterial outer membrane biogenesis; LPS lipid A biosynthesis. Its function is as follows. Catalyzes the last two sequential reactions in the de novo biosynthetic pathway for UDP-N-acetylglucosamine (UDP-GlcNAc). The C-terminal domain catalyzes the transfer of acetyl group from acetyl coenzyme A to glucosamine-1-phosphate (GlcN-1-P) to produce N-acetylglucosamine-1-phosphate (GlcNAc-1-P), which is converted into UDP-GlcNAc by the transfer of uridine 5-monophosphate (from uridine 5-triphosphate), a reaction catalyzed by the N-terminal domain. The chain is Bifunctional protein GlmU from Acidovorax sp. (strain JS42).